A 720-amino-acid polypeptide reads, in one-letter code: Engulfment and cell motility protein 3 (720 aa).

The ELMO domain occupies 307–479 (EQRDQLQALR…VVREQLARTL (173 aa)). Residues 542–664 (RLCEGMLFRK…TDGLSALLGS (123 aa)) enclose the PH domain. An SH3-binding motif is present at residues 696–706 (PEQPPPVPPPP).

Probably interacts directly with the SH3-domain of DOCK1 via its SH3-binding site. Part of a complex with DOCK1 and RAC1. Interacts with ADGRB3.

The protein localises to the cytoplasm. Involved in cytoskeletal rearrangements required for phagocytosis of apoptotic cells and cell motility. Acts in association with DOCK1 and CRK. Was initially proposed to be required in complex with DOCK1 to activate Rac Rho small GTPases. May enhance the guanine nucleotide exchange factor (GEF) activity of DOCK1. The chain is Engulfment and cell motility protein 3 (Elmo3) from Mus musculus (Mouse).